The following is a 25-amino-acid chain: Zinc metalloproteinase-disintegrin-like daborhagin-M (25 aa).

The Peptidase M12B domain maps to 14-25 (SYVELIITVDHS). Glutamate 17 is a binding site for Ca(2+).

The protein belongs to the venom metalloproteinase (M12B) family. P-III subfamily. P-IIIa sub-subfamily. In terms of assembly, monomer. The cofactor is Zn(2+). In terms of processing, N-glycosylated. Contains 16 disulfide bonds. As to expression, expressed by the venom gland.

It localises to the secreted. Inhibited by EDTA, EGTA and 1,10-phenanthroline. Addition of Mg(2+) or Ca(2+) increases the casein hydrolysis rate. Snake venom zinc metalloprotease that possesses high hemorrhagic activity (minimum hemorrhagic dose, MHD=0.86 ug) when subcutaneously injected into mice. Has potent fibrinogenolytic activity on alpha-chain of fibrinogen (FGA). Hydrolyzes model substrate (beta-chain of insulin) at Ala(14)-Leu(15) and Tyr(16)-Leu(17) followed by His(10)-Leu(11) and Phe(24)-Phe(25). The protein is Zinc metalloproteinase-disintegrin-like daborhagin-M of Daboia siamensis (Eastern Russel's viper).